Consider the following 255-residue polypeptide: Hydroxyacylglutathione hydrolase (255 aa).

The Zn(2+) site is built by His53, His55, Asp57, His58, His110, Asp127, and His165.

The protein belongs to the metallo-beta-lactamase superfamily. Glyoxalase II family. Monomer. Requires Zn(2+) as cofactor.

The enzyme catalyses an S-(2-hydroxyacyl)glutathione + H2O = a 2-hydroxy carboxylate + glutathione + H(+). Its pathway is secondary metabolite metabolism; methylglyoxal degradation; (R)-lactate from methylglyoxal: step 2/2. Thiolesterase that catalyzes the hydrolysis of S-D-lactoyl-glutathione to form glutathione and D-lactic acid. The protein is Hydroxyacylglutathione hydrolase of Xanthomonas oryzae pv. oryzae (strain MAFF 311018).